The primary structure comprises 546 residues: CTP synthase (546 aa).

The segment at 1–266 (MARYIFITGG…DTEVLDVFGL (266 aa)) is amidoligase domain. Serine 13 is a binding site for CTP. Residue serine 13 coordinates UTP. Position 14–19 (14–19 (SLGKGL)) interacts with ATP. Tyrosine 54 serves as a coordination point for L-glutamine. ATP is bound at residue aspartate 71. Mg(2+) contacts are provided by aspartate 71 and glutamate 140. CTP-binding positions include 147-149 (DIE), 187-192 (KTKPTQ), and lysine 223. UTP contacts are provided by residues 187 to 192 (KTKPTQ) and lysine 223. Residues 293 to 545 (NIAIVGKYTG…IGAAKERSRL (253 aa)) form the Glutamine amidotransferase type-1 domain. An L-glutamine-binding site is contributed by alanine 357. Cysteine 384 serves as the catalytic Nucleophile; for glutamine hydrolysis. L-glutamine contacts are provided by residues 385–388 (FGMQ), glutamate 408, and arginine 473. Active-site residues include histidine 518 and glutamate 520.

Belongs to the CTP synthase family. Homotetramer.

It carries out the reaction UTP + L-glutamine + ATP + H2O = CTP + L-glutamate + ADP + phosphate + 2 H(+). The enzyme catalyses L-glutamine + H2O = L-glutamate + NH4(+). It catalyses the reaction UTP + NH4(+) + ATP = CTP + ADP + phosphate + 2 H(+). It participates in pyrimidine metabolism; CTP biosynthesis via de novo pathway; CTP from UDP: step 2/2. With respect to regulation, allosterically activated by GTP, when glutamine is the substrate; GTP has no effect on the reaction when ammonia is the substrate. The allosteric effector GTP functions by stabilizing the protein conformation that binds the tetrahedral intermediate(s) formed during glutamine hydrolysis. Inhibited by the product CTP, via allosteric rather than competitive inhibition. Catalyzes the ATP-dependent amination of UTP to CTP with either L-glutamine or ammonia as the source of nitrogen. Regulates intracellular CTP levels through interactions with the four ribonucleotide triphosphates. This is CTP synthase from Phenylobacterium zucineum (strain HLK1).